The following is a 341-amino-acid chain: GTPase Obg (341 aa).

In terms of domain architecture, Obg spans 1–159 (MKFLDQAKVY…RTLWLRLKLI (159 aa)). The region spanning 160-327 (ADAGLIGLPN…MLRAGAHMIE (168 aa)) is the OBG-type G domain. Residues 166–173 (GLPNAGKS), 191–195 (FTTLY), 212–215 (DIPG), 279–282 (SQID), and 308–310 (SAV) contribute to the GTP site. 2 residues coordinate Mg(2+): Ser-173 and Thr-193.

It belongs to the TRAFAC class OBG-HflX-like GTPase superfamily. OBG GTPase family. In terms of assembly, monomer. The cofactor is Mg(2+).

It localises to the cytoplasm. Functionally, an essential GTPase which binds GTP, GDP and possibly (p)ppGpp with moderate affinity, with high nucleotide exchange rates and a fairly low GTP hydrolysis rate. Plays a role in control of the cell cycle, stress response, ribosome biogenesis and in those bacteria that undergo differentiation, in morphogenesis control. The sequence is that of GTPase Obg from Bartonella quintana (strain Toulouse) (Rochalimaea quintana).